The sequence spans 178 residues: Cytochrome b6-f complex iron-sulfur subunit (178 aa).

A helical transmembrane segment spans residues 20–42 (LLTFGSVTGVALGSLYPVVKYFI). The Rieske domain occupies 68 to 161 (WLANHSDGDR…IAVENDNVFV (94 aa)). [2Fe-2S] cluster-binding residues include Cys-107, His-109, Cys-125, and His-128. Cys-112 and Cys-127 are disulfide-bonded.

The protein belongs to the Rieske iron-sulfur protein family. The 4 large subunits of the cytochrome b6-f complex are cytochrome b6, subunit IV (17 kDa polypeptide, PetD), cytochrome f and the Rieske protein, while the 4 small subunits are PetG, PetL, PetM and PetN. The complex functions as a dimer. Requires [2Fe-2S] cluster as cofactor.

Its subcellular location is the cellular thylakoid membrane. The enzyme catalyses 2 oxidized [plastocyanin] + a plastoquinol + 2 H(+)(in) = 2 reduced [plastocyanin] + a plastoquinone + 4 H(+)(out). In terms of biological role, component of the cytochrome b6-f complex, which mediates electron transfer between photosystem II (PSII) and photosystem I (PSI), cyclic electron flow around PSI, and state transitions. The chain is Cytochrome b6-f complex iron-sulfur subunit from Prochlorococcus marinus (strain MIT 9303).